Here is a 916-residue protein sequence, read N- to C-terminus: Translation initiation factor IF-2 (916 aa).

The span at 151–191 (NLDEQQRLAESDRARDEAIQRKRDEEQAAKDRVEAERKAAE) shows a compositional bias: basic and acidic residues. Disordered stretches follow at residues 151 to 262 (NLDE…SHVM) and 280 to 328 (HLSA…ERPT). Composition is skewed to low complexity over residues 192–243 (EAAA…ATPA) and 293–305 (RGKPTGRPGSSSS). Positions 415 to 584 (SRPPVVTIMG…SLQAEVLELK (170 aa)) constitute a tr-type G domain. Residues 424 to 431 (GHVDHGKT) are G1. 424 to 431 (GHVDHGKT) contacts GTP. The tract at residues 449–453 (GITQH) is G2. Residues 470–473 (DTPG) are G3. GTP is bound by residues 470–474 (DTPGH) and 524–527 (NKID). The interval 524–527 (NKID) is G4. The tract at residues 560–562 (SAK) is G5.

Belongs to the TRAFAC class translation factor GTPase superfamily. Classic translation factor GTPase family. IF-2 subfamily.

The protein resides in the cytoplasm. Its function is as follows. One of the essential components for the initiation of protein synthesis. Protects formylmethionyl-tRNA from spontaneous hydrolysis and promotes its binding to the 30S ribosomal subunits. Also involved in the hydrolysis of GTP during the formation of the 70S ribosomal complex. The sequence is that of Translation initiation factor IF-2 from Xanthomonas campestris pv. campestris (strain ATCC 33913 / DSM 3586 / NCPPB 528 / LMG 568 / P 25).